Reading from the N-terminus, the 692-residue chain is Potassium-transporting ATPase ATP-binding subunit (692 aa).

The next 4 helical transmembrane spans lie at 35–55 (VMFIVFLGALFTTWIFFKDLY), 64–84 (LQISLWLWFTVLFANFAEAIA), 213–233 (IALTMLLSGLSFIFLIAVMSL), and 254–274 (ILISLLVCLIPTTIAGLLSAI). The 4-aspartylphosphate intermediate role is filled by Asp-307. ATP-binding positions include Asp-344, Glu-348, 377 to 384 (FSASTKMS), and Lys-400. Positions 523 and 527 each coordinate Mg(2+). Transmembrane regions (helical) follow at residues 592 to 612 (YFAILPALFGSFYAVSEVGPL), 626 to 646 (AVLSAVIFNALVIPALIPLAL), and 672 to 692 (MVIPFLGIKCIDLMLGFLGII).

Belongs to the cation transport ATPase (P-type) (TC 3.A.3) family. Type IA subfamily. As to quaternary structure, the system is composed of three essential subunits: KdpA, KdpB and KdpC.

The protein resides in the cell inner membrane. It catalyses the reaction K(+)(out) + ATP + H2O = K(+)(in) + ADP + phosphate + H(+). Part of the high-affinity ATP-driven potassium transport (or Kdp) system, which catalyzes the hydrolysis of ATP coupled with the electrogenic transport of potassium into the cytoplasm. This subunit is responsible for energy coupling to the transport system and for the release of the potassium ions to the cytoplasm. This is Potassium-transporting ATPase ATP-binding subunit from Leptospira interrogans serogroup Icterohaemorrhagiae serovar Lai (strain 56601).